We begin with the raw amino-acid sequence, 508 residues long: Glycerol kinase (508 aa).

T14 serves as a coordination point for ADP. ATP-binding residues include T14, T15, and S16. T14 provides a ligand contact to sn-glycerol 3-phosphate. Residue R18 participates in ADP binding. Sn-glycerol 3-phosphate contacts are provided by R84, E85, Y136, and D245. R84, E85, Y136, D245, and Q246 together coordinate glycerol. 2 residues coordinate ADP: T267 and G314. ATP contacts are provided by T267, G314, Q318, and G415. 2 residues coordinate ADP: G415 and N419.

It belongs to the FGGY kinase family.

The enzyme catalyses glycerol + ATP = sn-glycerol 3-phosphate + ADP + H(+). It functions in the pathway polyol metabolism; glycerol degradation via glycerol kinase pathway; sn-glycerol 3-phosphate from glycerol: step 1/1. Its activity is regulated as follows. Inhibited by fructose 1,6-bisphosphate (FBP). Key enzyme in the regulation of glycerol uptake and metabolism. Catalyzes the phosphorylation of glycerol to yield sn-glycerol 3-phosphate. This is Glycerol kinase from Bordetella parapertussis (strain 12822 / ATCC BAA-587 / NCTC 13253).